We begin with the raw amino-acid sequence, 494 residues long: Aspartyl/glutamyl-tRNA(Asn/Gln) amidotransferase subunit B (494 aa).

This sequence belongs to the GatB/GatE family. GatB subfamily. As to quaternary structure, heterotrimer of A, B and C subunits.

The catalysed reaction is L-glutamyl-tRNA(Gln) + L-glutamine + ATP + H2O = L-glutaminyl-tRNA(Gln) + L-glutamate + ADP + phosphate + H(+). It catalyses the reaction L-aspartyl-tRNA(Asn) + L-glutamine + ATP + H2O = L-asparaginyl-tRNA(Asn) + L-glutamate + ADP + phosphate + 2 H(+). Functionally, allows the formation of correctly charged Asn-tRNA(Asn) or Gln-tRNA(Gln) through the transamidation of misacylated Asp-tRNA(Asn) or Glu-tRNA(Gln) in organisms which lack either or both of asparaginyl-tRNA or glutaminyl-tRNA synthetases. The reaction takes place in the presence of glutamine and ATP through an activated phospho-Asp-tRNA(Asn) or phospho-Glu-tRNA(Gln). The chain is Aspartyl/glutamyl-tRNA(Asn/Gln) amidotransferase subunit B from Rhodopseudomonas palustris (strain HaA2).